Here is a 516-residue protein sequence, read N- to C-terminus: Maturase K (516 aa).

It belongs to the intron maturase 2 family. MatK subfamily.

The protein localises to the plastid. The protein resides in the chloroplast. Functionally, usually encoded in the trnK tRNA gene intron. Probably assists in splicing its own and other chloroplast group II introns. The chain is Maturase K from Medeola virginiana (Indian cucumber root).